A 405-amino-acid chain; its full sequence is Probable tRNA sulfurtransferase (405 aa).

In terms of domain architecture, THUMP spans 60–165 (EPVNDRLKVV…QDGAYISNQL (106 aa)). ATP contacts are provided by residues 183 to 184 (ML), 208 to 209 (HF), arginine 265, glycine 287, and glutamine 296.

This sequence belongs to the ThiI family.

Its subcellular location is the cytoplasm. It carries out the reaction [ThiI sulfur-carrier protein]-S-sulfanyl-L-cysteine + a uridine in tRNA + 2 reduced [2Fe-2S]-[ferredoxin] + ATP + H(+) = [ThiI sulfur-carrier protein]-L-cysteine + a 4-thiouridine in tRNA + 2 oxidized [2Fe-2S]-[ferredoxin] + AMP + diphosphate. It catalyses the reaction [ThiS sulfur-carrier protein]-C-terminal Gly-Gly-AMP + S-sulfanyl-L-cysteinyl-[cysteine desulfurase] + AH2 = [ThiS sulfur-carrier protein]-C-terminal-Gly-aminoethanethioate + L-cysteinyl-[cysteine desulfurase] + A + AMP + 2 H(+). The protein operates within cofactor biosynthesis; thiamine diphosphate biosynthesis. In terms of biological role, catalyzes the ATP-dependent transfer of a sulfur to tRNA to produce 4-thiouridine in position 8 of tRNAs, which functions as a near-UV photosensor. Also catalyzes the transfer of sulfur to the sulfur carrier protein ThiS, forming ThiS-thiocarboxylate. This is a step in the synthesis of thiazole, in the thiamine biosynthesis pathway. The sulfur is donated as persulfide by IscS. In Lactobacillus delbrueckii subsp. bulgaricus (strain ATCC BAA-365 / Lb-18), this protein is Probable tRNA sulfurtransferase.